The primary structure comprises 132 residues: Ribosome-binding factor A (132 aa).

It belongs to the RbfA family. Monomer. Binds 30S ribosomal subunits, but not 50S ribosomal subunits or 70S ribosomes.

It localises to the cytoplasm. Its function is as follows. One of several proteins that assist in the late maturation steps of the functional core of the 30S ribosomal subunit. Associates with free 30S ribosomal subunits (but not with 30S subunits that are part of 70S ribosomes or polysomes). Required for efficient processing of 16S rRNA. May interact with the 5'-terminal helix region of 16S rRNA. In Pseudomonas putida (strain GB-1), this protein is Ribosome-binding factor A.